The chain runs to 178 residues: CASP-like protein 2A2 (178 aa).

Topologically, residues 1 to 22 are cytoplasmic; it reads MDKTDQTAIDESALVLNRTEKS. The helical transmembrane segment at 23 to 43 threads the bilayer; sequence AEAVLRVASMALSITGLVIMI. The Extracellular segment spans residues 44–69; the sequence is KNSISNEFGSVSYSNIGAFMYLVSAN. A helical transmembrane segment spans residues 70-90; sequence GVCAAYSLLSALAILALPCPI. Over 91–96 the chain is Cytoplasmic; it reads SKVQVR. The helical transmembrane segment at 97–117 threads the bilayer; it reads TLFLLDQVVTYVVLAAGAVSA. Residues 118–145 are Extracellular-facing; it reads ETVYLAYYGNIPITWSSACDSYGSFCHN. Residues 146-166 form a helical membrane-spanning segment; that stretch reads ALISVVFTFVVSLLYMLLSLI. At 167–178 the chain is on the cytoplasmic side; that stretch reads SSYRLFTRFEAP.

Belongs to the Casparian strip membrane proteins (CASP) family. Homodimer and heterodimers. Mostly expressed in flowers and buds and, to a lower extent, in roots and yellow siliques. Localized in the floral organ abscission zone.

It localises to the cell membrane. Its function is as follows. Involved in floral organ shedding. The sequence is that of CASP-like protein 2A2 from Arabidopsis thaliana (Mouse-ear cress).